Reading from the N-terminus, the 388-residue chain is Chaperone protein DnaJ (388 aa).

One can recognise a J domain in the interval D4–G69. 3 stretches are compositionally biased toward basic and acidic residues: residues K27–S50, D58–V73, and G113–S124. Disordered regions lie at residues K27–R86 and S99–D125. The CR-type zinc-finger motif lies at G140–E225. 8 residues coordinate Zn(2+): C153, C156, C173, C176, C199, C202, C213, and C216. CXXCXGXG motif repeat units lie at residues C153–G160, C173–G180, C199–G206, and C213–G220. The segment covering A362 to Q376 has biased composition (basic and acidic residues). The segment at A362–S388 is disordered.

Belongs to the DnaJ family. In terms of assembly, homodimer. Requires Zn(2+) as cofactor.

It localises to the cytoplasm. In terms of biological role, participates actively in the response to hyperosmotic and heat shock by preventing the aggregation of stress-denatured proteins and by disaggregating proteins, also in an autonomous, DnaK-independent fashion. Unfolded proteins bind initially to DnaJ; upon interaction with the DnaJ-bound protein, DnaK hydrolyzes its bound ATP, resulting in the formation of a stable complex. GrpE releases ADP from DnaK; ATP binding to DnaK triggers the release of the substrate protein, thus completing the reaction cycle. Several rounds of ATP-dependent interactions between DnaJ, DnaK and GrpE are required for fully efficient folding. Also involved, together with DnaK and GrpE, in the DNA replication of plasmids through activation of initiation proteins. The sequence is that of Chaperone protein DnaJ from Salinibacter ruber (strain DSM 13855 / M31).